We begin with the raw amino-acid sequence, 583 residues long: 2-succinyl-5-enolpyruvyl-6-hydroxy-3-cyclohexene-1-carboxylate synthase (583 aa).

This sequence belongs to the TPP enzyme family. MenD subfamily. In terms of assembly, homodimer. The cofactor is Mg(2+). It depends on Mn(2+) as a cofactor. Thiamine diphosphate is required as a cofactor.

The enzyme catalyses isochorismate + 2-oxoglutarate + H(+) = 5-enolpyruvoyl-6-hydroxy-2-succinyl-cyclohex-3-ene-1-carboxylate + CO2. The protein operates within quinol/quinone metabolism; 1,4-dihydroxy-2-naphthoate biosynthesis; 1,4-dihydroxy-2-naphthoate from chorismate: step 2/7. Its pathway is cofactor biosynthesis; phylloquinone biosynthesis. Functionally, catalyzes the thiamine diphosphate-dependent decarboxylation of 2-oxoglutarate and the subsequent addition of the resulting succinic semialdehyde-thiamine pyrophosphate anion to isochorismate to yield 2-succinyl-5-enolpyruvyl-6-hydroxy-3-cyclohexene-1-carboxylate (SEPHCHC). In Nostoc sp. (strain PCC 7120 / SAG 25.82 / UTEX 2576), this protein is 2-succinyl-5-enolpyruvyl-6-hydroxy-3-cyclohexene-1-carboxylate synthase.